We begin with the raw amino-acid sequence, 392 residues long: Outer membrane protein assembly factor BamB (392 aa).

An N-terminal signal peptide occupies residues 1–19 (MQLRKLLLPGLLSVTLLSG). C20 is lipidated: N-palmitoyl cysteine. C20 carries the S-diacylglycerol cysteine lipid modification.

It belongs to the BamB family. As to quaternary structure, part of the Bam complex, which is composed of the outer membrane protein BamA, and four lipoproteins BamB, BamC, BamD and BamE.

Its subcellular location is the cell outer membrane. In terms of biological role, part of the outer membrane protein assembly complex, which is involved in assembly and insertion of beta-barrel proteins into the outer membrane. The protein is Outer membrane protein assembly factor BamB of Salmonella typhimurium (strain LT2 / SGSC1412 / ATCC 700720).